The primary structure comprises 236 residues: 15,16-dihydrobiliverdin:ferredoxin oxidoreductase (236 aa).

The protein belongs to the HY2 family.

It carries out the reaction 15,16-dihydrobiliverdin + oxidized 2[4Fe-4S]-[ferredoxin] = biliverdin IXalpha + reduced 2[4Fe-4S]-[ferredoxin] + 2 H(+). Catalyzes the two-electron reduction of biliverdin IX-alpha at the C15 methine bridge. In Prochlorococcus marinus (strain MIT 9215), this protein is 15,16-dihydrobiliverdin:ferredoxin oxidoreductase.